The following is a 285-amino-acid chain: MNTFQMRDKLKERLSHLDVDFKFNREEETLRIYRTDNNKGITIKLNAIVAKYEDKKEKIVDEIVYYVDEAIAQMADKTLESISSSQIMPVIRATSFDKKTKQGVPFIYDEHTAETAVYYAVDLGKSYRLIDESMLEDLKLTEQQIREMSLFNVRKLSNSYTTDEVKGNIFYFINSNDGYDASRILNTAFLNEIEAQCQGEMLVAVPHQDVLIIADIRNKTGYDVMAHLTMEFFTKGLVPITSLSFGYKQGHLEPIFILGKNNKQKRDPNVIQRLEANRRKFNKDK.

The protein belongs to the UPF0354 family.

The chain is UPF0354 protein SA1564 from Staphylococcus aureus (strain N315).